Here is a 292-residue protein sequence, read N- to C-terminus: UTP--glucose-1-phosphate uridylyltransferase (292 aa).

Belongs to the UDPGP type 2 family. Interacts with FloT.

It localises to the cell membrane. The protein resides in the membrane raft. It catalyses the reaction alpha-D-glucose 1-phosphate + UTP + H(+) = UDP-alpha-D-glucose + diphosphate. It participates in glycolipid metabolism; diglucosyl-diacylglycerol biosynthesis. Its function is as follows. Catalyzes the formation of UDP-glucose from glucose-1-phosphate and UTP. This is an intermediate step in the biosynthesis of diglucosyl-diacylglycerol (Glc2-DAG), i.e. the predominant glycolipid found in B.subtilis membrane, which is also used as a membrane anchor for lipoteichoic acid (LTA). Has a role in the biosynthesis of all phosphate-containing envelope polymers, since UDP-glucose serves as a glucosyl donor not only for the biosynthesis of LTA but also for wall teichoic acids (WTAs). Is required for biofilm formation. This is likely due to another role of UDP-glucose, which might also act as a metabolic signal regulating biofilm formation or may be involved in some unknown biosynthetic pathway essential for biofilm formation, e.g. the synthesis of an exopolysaccharide. This Bacillus subtilis (strain 168) protein is UTP--glucose-1-phosphate uridylyltransferase (gtaB).